The chain runs to 264 residues: Teichoic acids export ATP-binding protein TagH (264 aa).

Residues 5-243 form the ABC transporter domain; that stretch reads VNIKNVTKEY…YEAFLNDFKK (239 aa). 57–64 lines the ATP pocket; it reads GINGSGKS.

The protein belongs to the ABC transporter superfamily. Teichoic acids exporter (TC 3.A.1.104.1) family. In terms of assembly, the complex is composed of two ATP-binding proteins (TagH) and two transmembrane proteins (TagG).

It localises to the cell membrane. The catalysed reaction is ATP + H2O + teichoic acidSide 1 = ADP + phosphate + teichoic acidSide 2.. Part of the ABC transporter complex TagGH involved in teichoic acids export. Responsible for energy coupling to the transport system. The polypeptide is Teichoic acids export ATP-binding protein TagH (Staphylococcus aureus (strain USA300)).